A 131-amino-acid polypeptide reads, in one-letter code: Fluoride-specific ion channel FluC 2 (131 aa).

4 consecutive transmembrane segments (helical) span residues 4 to 24, 46 to 66, 71 to 91, and 105 to 125; these read IIQG…ARFW, VSGA…HGVF, PWLF…SFAL, and AISN…LGFA. 2 residues coordinate Na(+): glycine 81 and threonine 84.

It belongs to the fluoride channel Fluc/FEX (TC 1.A.43) family.

The protein localises to the cell inner membrane. The catalysed reaction is fluoride(in) = fluoride(out). With respect to regulation, na(+) is not transported, but it plays an essential structural role and its presence is essential for fluoride channel function. In terms of biological role, fluoride-specific ion channel. Important for reducing fluoride concentration in the cell, thus reducing its toxicity. This chain is Fluoride-specific ion channel FluC 2, found in Rhodopseudomonas palustris (strain BisB18).